Here is a 185-residue protein sequence, read N- to C-terminus: Hypoxanthine/guanine phosphoribosyltransferase (185 aa).

This sequence belongs to the purine/pyrimidine phosphoribosyltransferase family. Archaeal HPRT subfamily. Homodimer.

It is found in the cytoplasm. It carries out the reaction IMP + diphosphate = hypoxanthine + 5-phospho-alpha-D-ribose 1-diphosphate. It catalyses the reaction GMP + diphosphate = guanine + 5-phospho-alpha-D-ribose 1-diphosphate. It functions in the pathway purine metabolism; IMP biosynthesis via salvage pathway; IMP from hypoxanthine: step 1/1. In terms of biological role, catalyzes a salvage reaction resulting in the formation of IMP that is energically less costly than de novo synthesis. This Methanococcus maripaludis (strain C6 / ATCC BAA-1332) protein is Hypoxanthine/guanine phosphoribosyltransferase.